The following is a 213-amino-acid chain: Protein-L-isoaspartate O-methyltransferase (213 aa).

Ser62 is a catalytic residue.

It belongs to the methyltransferase superfamily. L-isoaspartyl/D-aspartyl protein methyltransferase family.

It localises to the cytoplasm. It catalyses the reaction [protein]-L-isoaspartate + S-adenosyl-L-methionine = [protein]-L-isoaspartate alpha-methyl ester + S-adenosyl-L-homocysteine. Its function is as follows. Catalyzes the methyl esterification of L-isoaspartyl residues in peptides and proteins that result from spontaneous decomposition of normal L-aspartyl and L-asparaginyl residues. It plays a role in the repair and/or degradation of damaged proteins. The polypeptide is Protein-L-isoaspartate O-methyltransferase (Idiomarina loihiensis (strain ATCC BAA-735 / DSM 15497 / L2-TR)).